A 74-amino-acid polypeptide reads, in one-letter code: Brevinin-2Ta (74 aa).

The signal sequence occupies residues 1-22; it reads MFTMKKSLLLFFFLGTISLSLC. A propeptide spanning residues 23–41 is cleaved from the precursor; the sequence is QEERNADEDDGEMTEEEKR. A disulfide bond links C68 and C74.

The protein belongs to the frog skin active peptide (FSAP) family. Brevinin subfamily. As to expression, expressed by the skin glands.

The protein localises to the secreted. Its function is as follows. Antimicrobial peptide. This Rana temporaria (European common frog) protein is Brevinin-2Ta.